The primary structure comprises 460 residues: Cysteine--tRNA ligase (460 aa).

Residue Cys-29 coordinates Zn(2+). The 'HIGH' region motif lies at Ala-31 to His-41. Zn(2+)-binding residues include Cys-212, His-237, and Glu-241. The 'KMSKS' region motif lies at Lys-268–Ser-272. Residue Lys-271 coordinates ATP.

This sequence belongs to the class-I aminoacyl-tRNA synthetase family. Monomer. It depends on Zn(2+) as a cofactor.

It is found in the cytoplasm. It carries out the reaction tRNA(Cys) + L-cysteine + ATP = L-cysteinyl-tRNA(Cys) + AMP + diphosphate. The sequence is that of Cysteine--tRNA ligase from Corynebacterium glutamicum (strain ATCC 13032 / DSM 20300 / JCM 1318 / BCRC 11384 / CCUG 27702 / LMG 3730 / NBRC 12168 / NCIMB 10025 / NRRL B-2784 / 534).